The following is a 403-amino-acid chain: Ubiquitin-like modifier-activating enzyme 5 (403 aa).

Gly81, Asp102, Lys125, Asn148, and Asn182 together coordinate ATP. 2 residues coordinate Zn(2+): Cys224 and Cys227. The Glycyl thioester intermediate role is filled by Cys248. Residues Cys301 and Cys306 each contribute to the Zn(2+) site. The segment covering Cys306–Lys315 has biased composition (basic and acidic residues). A disordered region spans residues Cys306 to Asp337. The UFM1-interacting sequence (UIS) motif lies at Val333–Val345. Positions Ser346–Lys376 are linker. Ser357 and Ser392 each carry phosphoserine. The UFC1-binding sequence (UFC) motif lies at Asp388–Met403.

Belongs to the ubiquitin-activating E1 family. UBA5 subfamily. Homodimer; homodimerization is required for UFM1 activation. Interacts (via UIS motif) with UFM1; binds UFM1 via a trans-binding mechanism in which UFM1 interacts with distinct sites in both subunits of the UBA5 homodimer. Interacts (via C-terminus) with UFC1. Interacts (via UIS motif) with GABARAPL2 and, with lower affinity, with GABARAP and GABARAPL1.

It is found in the cytoplasm. It localises to the nucleus. The protein localises to the endoplasmic reticulum membrane. Its subcellular location is the golgi apparatus. In terms of biological role, E1-like enzyme which specifically catalyzes the first step in ufmylation. Activates UFM1 by first adenylating its C-terminal glycine residue with ATP, and thereafter linking this residue to the side chain of a cysteine residue in E1, yielding a UFM1-E1 thioester and free AMP. Activates UFM1 via a trans-binding mechanism, in which UFM1 interacts with distinct sites in both subunits of the UBA5 homodimer. Trans-binding also promotes stabilization of the UBA5 homodimer, and enhances ATP-binding. Transfer of UFM1 from UBA5 to the E2-like enzyme UFC1 also takes place using a trans mechanism. Ufmylation plays a key role in various processes, such as ribosome recycling, response to DNA damage, interferon response or reticulophagy (also called ER-phagy). Ufmylation is essential for erythroid differentiation of both megakaryocytes and erythrocytes. This Rattus norvegicus (Rat) protein is Ubiquitin-like modifier-activating enzyme 5.